The chain runs to 738 residues: Ethylene receptor (738 aa).

3 helical membrane passes run isoleucine 23–valine 43, valine 54–tryptophan 74, and valine 92–leucine 112. Cysteine 65 and histidine 69 together coordinate Cu cation. The region spanning aspartate 158–leucine 307 is the GAF domain. In terms of domain architecture, Histidine kinase spans valine 350–glutamate 589. Histidine 353 is modified (phosphohistidine; by autocatalysis). A Response regulatory domain is found at proline 612–leucine 729. Aspartate 660 bears the 4-aspartylphosphate mark.

This sequence belongs to the ethylene receptor family. As to quaternary structure, homodimer; disulfide-linked. It depends on Cu cation as a cofactor. In terms of processing, activation probably requires a transfer of a phosphate group between a His in the transmitter domain and an Asp of the receiver domain.

The protein resides in the endoplasmic reticulum membrane. It carries out the reaction ATP + protein L-histidine = ADP + protein N-phospho-L-histidine.. Its function is as follows. May act early in the ethylene signal transduction pathway, possibly as an ethylene receptor, or as a regulator of the pathway. The polypeptide is Ethylene receptor (ETR1) (Prunus persica (Peach)).